We begin with the raw amino-acid sequence, 1159 residues long: ATP-dependent helicase/deoxyribonuclease subunit B (1159 aa).

Belongs to the helicase family. AddB/RexB type 2 subfamily. As to quaternary structure, heterodimer of AddA and RexB. Requires Mg(2+) as cofactor.

In terms of biological role, the heterodimer acts as both an ATP-dependent DNA helicase and an ATP-dependent, dual-direction single-stranded exonuclease. Recognizes the chi site generating a DNA molecule suitable for the initiation of homologous recombination. This subunit has 5' -&gt; 3' nuclease activity but not helicase activity. This chain is ATP-dependent helicase/deoxyribonuclease subunit B, found in Leuconostoc mesenteroides subsp. mesenteroides (strain ATCC 8293 / DSM 20343 / BCRC 11652 / CCM 1803 / JCM 6124 / NCDO 523 / NBRC 100496 / NCIMB 8023 / NCTC 12954 / NRRL B-1118 / 37Y).